The primary structure comprises 110 residues: uncharacterized protein (110 aa).

This is an uncharacterized protein from Yersinia enterocolitica.